A 191-amino-acid chain; its full sequence is MIRITDAAQEHFLKLLAKQEEGTQIRVFVINPGTPNAECGVSYCPPDAVEASDTVVKFEKISAYVDELSSPYLEDADIDFVTDQLGSQLTLKAPNAKMRKVDDSAPLMERVEYVLQSQINPQLAGHGGRVTLMEITDDGLAILQFGGGCNGCSMVDFTLKEGIEKELLEKFPELKGVRDLTEHQRGEHSYY.

Cysteine 149 and cysteine 152 together coordinate [4Fe-4S] cluster.

This sequence belongs to the NfuA family. As to quaternary structure, homodimer. It depends on [4Fe-4S] cluster as a cofactor.

Functionally, involved in iron-sulfur cluster biogenesis. Binds a 4Fe-4S cluster, can transfer this cluster to apoproteins, and thereby intervenes in the maturation of Fe/S proteins. Could also act as a scaffold/chaperone for damaged Fe/S proteins. The chain is Fe/S biogenesis protein NfuA from Pectobacterium atrosepticum (strain SCRI 1043 / ATCC BAA-672) (Erwinia carotovora subsp. atroseptica).